The following is a 182-amino-acid chain: UPF0397 protein BCQ_2505 (182 aa).

5 helical membrane passes run 9–29 (VVAIGIGAALYGILGLWGFSI), 40–60 (AILTVFGALFGPVAGLLIGLI), 71–91 (WGIWWGWVISSGIIGFAMGFI), 114–134 (ITGLIGIVIAIIFAGAFDIIV), and 142–162 (IVIQVLGATIADVIVFLVLGL).

It belongs to the UPF0397 family.

It localises to the cell membrane. The polypeptide is UPF0397 protein BCQ_2505 (Bacillus cereus (strain Q1)).